The sequence spans 187 residues: Resolvase OPG149 (187 aa).

The protein belongs to the RuvC family. Poxviruses-type subfamily. Requires Mg(2+) as cofactor.

Plays a role in DNA replication by cleaving viral DNA concatamers to yield unit-length viral genomes. The concatamer junctions contain inverted repeat sequences that can be extruded as cruciforms, yielding Holliday junctions that A22 protein cleaves. The protein is Resolvase OPG149 (OPG149) of Variola virus (isolate Human/India/Ind3/1967) (VARV).